The chain runs to 622 residues: Low affinity potassium transport system protein Kup (622 aa).

12 helical membrane-spanning segments follow: residues 9–29 (LPAITLAAIGVVYGDIGTSPL), 49–69 (VFGFLSLIFWLLIFVVSIKYL), 103–123 (VIMGLIGGSFFYGEVVITPAI), 137–157 (PQLDTWIVPLSIIVLTLLFMI), 165–185 (VGKLFAPIMLTWFLILAVLGL), 213–233 (VSFIALGAVVLSITGVEALYA), 247–267 (WFTVVLPSLVLNYFGQGALLL), 276–296 (PFFLLAPDWALIPLLILAALA), 337–357 (IYIPFVNWLLYFAVVVVIVSF), 363–383 (LAAAYGIAVTGTMVLTSILST), 396–416 (FVALILIAFLCVDIPLFSANL), and 419–439 (LLSGGWLPLSLGLIMFTIMTT).

This sequence belongs to the HAK/KUP transporter (TC 2.A.72) family.

It is found in the cell inner membrane. The catalysed reaction is K(+)(in) + H(+)(in) = K(+)(out) + H(+)(out). Its function is as follows. Responsible for the low-affinity transport of potassium into the cell. Likely operates as a K(+):H(+) symporter. The protein is Low affinity potassium transport system protein Kup of Salmonella typhi.